The following is a 1184-amino-acid chain: von Willebrand factor A domain-containing protein 3A (1184 aa).

Positions 1-24 (MKKYRKISIGCFAMATQTSHVFHG) are cleaved as a signal peptide. Positions 40 to 62 (GRDSKKPLKQKNMNGLGQNSDNG) are disordered. Residues 50-62 (KNMNGLGQNSDNG) are compositionally biased toward polar residues. Residues 333 to 357 (TSRDMDELLAEIQKAQSLLSHVQAL) adopt a coiled-coil conformation. A VWFA 1 domain is found at 511–708 (RVVVLLDISA…SIMSEMEKAL (198 aa)). The N-linked (GlcNAc...) asparagine glycan is linked to N709. The disordered stretch occupies residues 729 to 780 (LGSSALPKEKPKTLQLRSQPKKLCPPRPTVPLGARMSIKDDPDREKSPPLKS). Positions 765 to 776 (SIKDDPDREKSP) are enriched in basic and acidic residues. The VWFA 2 domain maps to 959-1131 (KVCILLDTSG…KIHSLLTKGF (173 aa)).

It localises to the secreted. In Homo sapiens (Human), this protein is von Willebrand factor A domain-containing protein 3A (VWA3A).